Reading from the N-terminus, the 161-residue chain is Cytochrome c-type biogenesis protein CcmE (161 aa).

Over 1–8 (MNPRRKKR) the chain is Cytoplasmic. Residues 9-29 (LGLILALFVGISATVGLMLYA) form a helical; Signal-anchor for type II membrane protein membrane-spanning segment. The Periplasmic portion of the chain corresponds to 30 to 161 (LNQNMDLFYT…TEQQKQGTGQ (132 aa)). Residues histidine 129 and tyrosine 133 each contribute to the heme site. A disordered region spans residues 142 to 161 (MKKTHEPLQYTEQQKQGTGQ). The segment covering 151-161 (YTEQQKQGTGQ) has biased composition (polar residues).

It belongs to the CcmE/CycJ family.

The protein localises to the cell inner membrane. Its function is as follows. Heme chaperone required for the biogenesis of c-type cytochromes. Transiently binds heme delivered by CcmC and transfers the heme to apo-cytochromes in a process facilitated by CcmF and CcmH. This chain is Cytochrome c-type biogenesis protein CcmE, found in Aliivibrio fischeri (strain MJ11) (Vibrio fischeri).